The chain runs to 78 residues: Large ribosomal subunit protein bL28 (78 aa).

The disordered stretch occupies residues 1–20 (MSRVCQVTGKGPVTGNNISH).

The protein belongs to the bacterial ribosomal protein bL28 family.

This is Large ribosomal subunit protein bL28 from Pseudomonas putida (strain ATCC 700007 / DSM 6899 / JCM 31910 / BCRC 17059 / LMG 24140 / F1).